Consider the following 109-residue polypeptide: Spermidine export protein MdtI (109 aa).

A run of 4 helical transmembrane segments spans residues 6 to 26 (WVHA…NVFL), 36 to 56 (FYGI…SQAV), 64 to 84 (AYAL…WVLF), and 88 to 108 (LNNK…MIKL).

It belongs to the drug/metabolite transporter (DMT) superfamily. Small multidrug resistance (SMR) (TC 2.A.7.1) family. MdtI subfamily. As to quaternary structure, forms a complex with MdtJ.

It localises to the cell inner membrane. In terms of biological role, catalyzes the excretion of spermidine. This chain is Spermidine export protein MdtI, found in Citrobacter koseri (strain ATCC BAA-895 / CDC 4225-83 / SGSC4696).